The following is a 151-amino-acid chain: Small ribosomal subunit protein uS15 (151 aa).

A compositionally biased stretch (basic residues) spans 1 to 16 (MPHRSRHKKGRSRSVR). The disordered stretch occupies residues 1–21 (MPHRSRHKKGRSRSVRPAHPT).

It belongs to the universal ribosomal protein uS15 family. In terms of assembly, part of the 30S ribosomal subunit.

The sequence is that of Small ribosomal subunit protein uS15 from Pyrobaculum islandicum (strain DSM 4184 / JCM 9189 / GEO3).